We begin with the raw amino-acid sequence, 88 residues long: MANIKSAKKRIKVIETKTLRNKMLKSSLKTTIKNFLTVVEGKNVEEAKAAYKTAARALDMSVSKGIVHKNKAARTKSRLAAKLNALNA.

Belongs to the bacterial ribosomal protein bS20 family.

In terms of biological role, binds directly to 16S ribosomal RNA. This Clostridium botulinum (strain ATCC 19397 / Type A) protein is Small ribosomal subunit protein bS20.